We begin with the raw amino-acid sequence, 1691 residues long: Helicase SWR1 (1691 aa).

Positions 1–244 are disordered; that stretch reads MPETASTANV…ATSNSTNRSP (244 aa). Composition is skewed to basic and acidic residues over residues 14-23 and 54-68; these read SDPDAIKTEQ and ENHH…DERP. Residues 126–155 show a composition bias toward polar residues; it reads LSKSRTSKRSTGANSNTKTEIHLTNGNSRK. Over residues 232-243 the composition is skewed to low complexity; it reads SRTATSNSTNRS. The region spanning 335–409 is the HSA domain; the sequence is PEPAEEPPRQ…RAVWISRYRI (75 aa). Disordered regions lie at residues 457-615 and 628-801; these read QARQ…AGGL and MNSE…NHKI. Residues 467 to 521 are compositionally biased toward acidic residues; the sequence is QLSEEDGFDDLSDDMSMADDDELGLASGEDEDDEDGDADSDIMSSDEEEGDEEDQ. Positions 564–575 are enriched in low complexity; it reads VDTAQATATENA. 2 stretches are compositionally biased toward acidic residues: residues 576–612 and 645–662; these read ETSD…DEDA and EMPD…EENE. A compositionally biased stretch (basic and acidic residues) spans 671-692; it reads PEPHESGALEKSTKEAVEEKEQ. Composition is skewed to polar residues over residues 706–722 and 749–778; these read GLSN…SQDN and PATN…TAST. Residues 823 to 988 enclose the Helicase ATP-binding domain; the sequence is AGLYANSTNG…WSLLFFLMPA (166 aa). An ATP-binding site is contributed by 836–843; that stretch reads DEMGLGKT. The DEAH box signature appears at 939 to 942; that stretch reads DEAH. Residues 1375-1525 enclose the Helicase C-terminal domain; the sequence is ILDKLLRKLQ…DVVIQEGEFT (151 aa). Disordered stretches follow at residues 1594–1632 and 1669–1691; these read EIQA…GGLD and DTKL…TRKR. The span at 1605–1618 shows a compositional bias: polar residues; it reads KPSNNASGTSTARQ. Basic residues predominate over residues 1677–1691; the sequence is DKKKGKKKGKDTRKR.

The protein belongs to the SNF2/RAD54 helicase family. SWR1 subfamily. In terms of assembly, component of the SWR1 chromatin-remodeling complex.

The protein localises to the nucleus. The catalysed reaction is ATP + H2O = ADP + phosphate + H(+). Catalytic component of the SWR1 complex which mediates the ATP-dependent exchange of histone H2A for the H2A variant HZT1 leading to transcriptional regulation of selected genes by chromatin remodeling. The protein is Helicase SWR1 (SWR1) of Gibberella zeae (strain ATCC MYA-4620 / CBS 123657 / FGSC 9075 / NRRL 31084 / PH-1) (Wheat head blight fungus).